The sequence spans 446 residues: ATP-dependent protease ATPase subunit HslU (446 aa).

ATP-binding positions include isoleucine 18, 60 to 65 (GVGKTE), aspartate 259, glutamate 324, and arginine 396.

It belongs to the ClpX chaperone family. HslU subfamily. In terms of assembly, a double ring-shaped homohexamer of HslV is capped on each side by a ring-shaped HslU homohexamer. The assembly of the HslU/HslV complex is dependent on binding of ATP.

The protein localises to the cytoplasm. Functionally, ATPase subunit of a proteasome-like degradation complex; this subunit has chaperone activity. The binding of ATP and its subsequent hydrolysis by HslU are essential for unfolding of protein substrates subsequently hydrolyzed by HslV. HslU recognizes the N-terminal part of its protein substrates and unfolds these before they are guided to HslV for hydrolysis. This is ATP-dependent protease ATPase subunit HslU from Vibrio atlanticus (strain LGP32) (Vibrio splendidus (strain Mel32)).